The primary structure comprises 277 residues: Release factor glutamine methyltransferase (277 aa).

S-adenosyl-L-methionine is bound by residues 117-121 (GTGCG), Asp-140, Trp-168, and Asn-182. Substrate is bound at residue 182-185 (NPPY).

This sequence belongs to the protein N5-glutamine methyltransferase family. PrmC subfamily.

It catalyses the reaction L-glutaminyl-[peptide chain release factor] + S-adenosyl-L-methionine = N(5)-methyl-L-glutaminyl-[peptide chain release factor] + S-adenosyl-L-homocysteine + H(+). Functionally, methylates the class 1 translation termination release factors RF1/PrfA and RF2/PrfB on the glutamine residue of the universally conserved GGQ motif. The polypeptide is Release factor glutamine methyltransferase (Buchnera aphidicola subsp. Acyrthosiphon pisum (strain APS) (Acyrthosiphon pisum symbiotic bacterium)).